The primary structure comprises 85 residues: Small ribosomal subunit protein uS17 (85 aa).

The protein belongs to the universal ribosomal protein uS17 family. Part of the 30S ribosomal subunit.

Functionally, one of the primary rRNA binding proteins, it binds specifically to the 5'-end of 16S ribosomal RNA. In Lachnoclostridium phytofermentans (strain ATCC 700394 / DSM 18823 / ISDg) (Clostridium phytofermentans), this protein is Small ribosomal subunit protein uS17.